The following is a 147-amino-acid chain: Lysozyme C (147 aa).

Positions 1-17 are cleaved as a signal peptide; it reads MRSLLILVLCFLPLAAP. The C-type lysozyme domain maps to 19–147; it reads KVYGRCELAA…VNVWIRGCRL (129 aa). 4 disulfides stabilise this stretch: cysteine 24/cysteine 145, cysteine 48/cysteine 133, cysteine 82/cysteine 98, and cysteine 94/cysteine 112. Catalysis depends on residues glutamate 53 and aspartate 70.

The protein belongs to the glycosyl hydrolase 22 family. In terms of assembly, monomer. Post-translationally, by an evolutionary shift in the site of proteolytic cleavage of prelysozyme, Gly-18 became the N-terminal residue of the mature protein instead of being the C-terminal residue of the signal sequence as in other birds.

The protein resides in the secreted. The enzyme catalyses Hydrolysis of (1-&gt;4)-beta-linkages between N-acetylmuramic acid and N-acetyl-D-glucosamine residues in a peptidoglycan and between N-acetyl-D-glucosamine residues in chitodextrins.. Its function is as follows. Lysozymes have primarily a bacteriolytic function; those in tissues and body fluids are associated with the monocyte-macrophage system and enhance the activity of immunoagents. The sequence is that of Lysozyme C (LYZ) from Phasianus colchicus colchicus (Black-necked pheasant).